A 212-amino-acid chain; its full sequence is Uracil-DNA glycosylase (212 aa).

The active-site Proton acceptor is Asp59.

The protein belongs to the uracil-DNA glycosylase (UDG) superfamily. UNG family.

It is found in the cytoplasm. The catalysed reaction is Hydrolyzes single-stranded DNA or mismatched double-stranded DNA and polynucleotides, releasing free uracil.. Its function is as follows. Excises uracil residues from the DNA which can arise as a result of misincorporation of dUMP residues by DNA polymerase or due to deamination of cytosine. The protein is Uracil-DNA glycosylase of Ureaplasma urealyticum serovar 10 (strain ATCC 33699 / Western).